Consider the following 497-residue polypeptide: tRNA-2-methylthio-N(6)-dimethylallyladenosine synthase (497 aa).

The disordered stretch occupies residues 1 to 48; it reads MTGTSNIPTHGKEHKDAPALLPLPAPNTHHTHAAHPGDPSHDRHPSRG. A compositionally biased stretch (low complexity) spans 18 to 28; it reads PALLPLPAPNT. The 118-residue stretch at 48–165 folds into the MTTase N-terminal domain; that stretch reads GKLFIKTHGC…LPDMIRARRE (118 aa). Residues cysteine 57, cysteine 94, cysteine 128, cysteine 202, cysteine 206, and cysteine 209 each contribute to the [4Fe-4S] cluster site. Positions 188–430 constitute a Radical SAM core domain; sequence RAEGPSAFVS…QKHINAYAAD (243 aa). The TRAM domain occupies 433 to 496; it reads KRMIGTVQTV…TNSLRGRVHT (64 aa).

The protein belongs to the methylthiotransferase family. MiaB subfamily. In terms of assembly, monomer. It depends on [4Fe-4S] cluster as a cofactor.

The protein resides in the cytoplasm. The catalysed reaction is N(6)-dimethylallyladenosine(37) in tRNA + (sulfur carrier)-SH + AH2 + 2 S-adenosyl-L-methionine = 2-methylsulfanyl-N(6)-dimethylallyladenosine(37) in tRNA + (sulfur carrier)-H + 5'-deoxyadenosine + L-methionine + A + S-adenosyl-L-homocysteine + 2 H(+). Functionally, catalyzes the methylthiolation of N6-(dimethylallyl)adenosine (i(6)A), leading to the formation of 2-methylthio-N6-(dimethylallyl)adenosine (ms(2)i(6)A) at position 37 in tRNAs that read codons beginning with uridine. In Xylella fastidiosa (strain M23), this protein is tRNA-2-methylthio-N(6)-dimethylallyladenosine synthase.